A 380-amino-acid polypeptide reads, in one-letter code: Cytochrome b (380 aa).

A run of 4 helical transmembrane segments spans residues 34 to 54 (SGSLLGLCLVVQILTGIFLAM), 78 to 99 (WFLRYVHANGVSLFFICMYCHI), 114 to 134 (WNVGVILFLVTILTAFMGYVL), and 179 to 199 (FFPFHFLFPFIIAALAVIHLV). Heme b is bound by residues His-84 and His-98. Heme b contacts are provided by His-183 and His-197. His-202 lines the a ubiquinone pocket. Transmembrane regions (helical) follow at residues 227–247 (TKDTVGFILLVAALFSLALLF), 289–309 (LGGVIALVAAILVLFLMPLLN), 321–341 (LSQAAFWLLVAHLFILTWIGS), and 348–369 (YVLLGQVASVLYFSLFIFGFPI).

The protein belongs to the cytochrome b family. In terms of assembly, the main subunits of complex b-c1 are: cytochrome b, cytochrome c1 and the Rieske protein. It depends on heme b as a cofactor.

The protein resides in the mitochondrion inner membrane. In terms of biological role, component of the ubiquinol-cytochrome c reductase complex (complex III or cytochrome b-c1 complex) that is part of the mitochondrial respiratory chain. The b-c1 complex mediates electron transfer from ubiquinol to cytochrome c. Contributes to the generation of a proton gradient across the mitochondrial membrane that is then used for ATP synthesis. This is Cytochrome b (MT-CYB) from Strongylocentrotus purpuratus (Purple sea urchin).